The following is a 196-amino-acid chain: Lipoprotein signal peptidase (196 aa).

Transmembrane regions (helical) follow at residues 75–95 (IVFL…MMSS) and 97–117 (TIGG…NLID). Active-site residues include D126 and D144. A helical membrane pass occupies residues 135-155 (YSFPVFNLADCFITLGVIILV).

It belongs to the peptidase A8 family.

It is found in the cell inner membrane. It carries out the reaction Release of signal peptides from bacterial membrane prolipoproteins. Hydrolyzes -Xaa-Yaa-Zaa-|-(S,diacylglyceryl)Cys-, in which Xaa is hydrophobic (preferably Leu), and Yaa (Ala or Ser) and Zaa (Gly or Ala) have small, neutral side chains.. Its pathway is protein modification; lipoprotein biosynthesis (signal peptide cleavage). In terms of biological role, this protein specifically catalyzes the removal of signal peptides from prolipoproteins. The chain is Lipoprotein signal peptidase from Rickettsia bellii (strain OSU 85-389).